Reading from the N-terminus, the 155-residue chain is UPF0735 ACT domain-containing protein CA_C1234 (155 aa).

One can recognise an ACT domain in the interval 79–154 (TISILIEHRR…NVLKVEIVAM (76 aa)).

Belongs to the UPF0735 family.

In Clostridium acetobutylicum (strain ATCC 824 / DSM 792 / JCM 1419 / IAM 19013 / LMG 5710 / NBRC 13948 / NRRL B-527 / VKM B-1787 / 2291 / W), this protein is UPF0735 ACT domain-containing protein CA_C1234.